The primary structure comprises 343 residues: MSNTDKERAIAAALAQIEKSYGKGSVMKLGQRPHVDIEAVSTGSLGLDIALGIGGVPKGRIIEIFGPESSGKTTLTLHLIAEAQKKGGTCAFIDAEHALDPAYAKKLGVNIDELIISQPDTGEQALEIADTLIRSSGIDMIIIDSVAALVPKSEIEGEMGDAQMASQARLMSQALRKLTASINRTNCITVFINQIRMKIGVMFGSPETTTGGNALKFYASVRIDIRRIGSIKDKEEVIGSQTKVKVVKNKVSPPFKTADFDIMYGSGISKEGEIIDLGVKLDIVEKSGSWFSYKNVRIGQGRENVKQYLKEHPQISNEIEKIIREKSSKITNINLDQTEEEND.

ATP is bound at residue 66–73 (GPESSGKT).

Belongs to the RecA family.

Its subcellular location is the cytoplasm. Its function is as follows. Can catalyze the hydrolysis of ATP in the presence of single-stranded DNA, the ATP-dependent uptake of single-stranded DNA by duplex DNA, and the ATP-dependent hybridization of homologous single-stranded DNAs. It interacts with LexA causing its activation and leading to its autocatalytic cleavage. In Rickettsia conorii (strain ATCC VR-613 / Malish 7), this protein is Protein RecA.